A 410-amino-acid polypeptide reads, in one-letter code: D-3-phosphoglycerate dehydrogenase (410 aa).

NAD(+) contacts are provided by residues 162 to 163 (HI), Asp182, 239 to 241 (AAR), and Asp265. The active site involves Arg241. The active site involves Glu270. His293 functions as the Proton donor in the catalytic mechanism. 293-296 (HIGG) lines the NAD(+) pocket. The ACT domain occupies 341–410 (RLLHIHENRP…DGTIRARVLY (70 aa)).

This sequence belongs to the D-isomer specific 2-hydroxyacid dehydrogenase family.

It catalyses the reaction (2R)-3-phosphoglycerate + NAD(+) = 3-phosphooxypyruvate + NADH + H(+). The enzyme catalyses (R)-2-hydroxyglutarate + NAD(+) = 2-oxoglutarate + NADH + H(+). The protein operates within amino-acid biosynthesis; L-serine biosynthesis; L-serine from 3-phospho-D-glycerate: step 1/3. Its activity is regulated as follows. In bacteria displays feedback inhibition by L-serine. Functionally, catalyzes the reversible oxidation of 3-phospho-D-glycerate to 3-phosphonooxypyruvate, the first step of the phosphorylated L-serine biosynthesis pathway. Also catalyzes the reversible oxidation of 2-hydroxyglutarate to 2-oxoglutarate. The sequence is that of D-3-phosphoglycerate dehydrogenase (serA) from Haemophilus influenzae (strain ATCC 51907 / DSM 11121 / KW20 / Rd).